The following is a 170-amino-acid chain: Peptide deformylase 2 (170 aa).

The Fe cation site is built by Cys94 and His136. Glu137 is an active-site residue. His140 is a binding site for Fe cation.

This sequence belongs to the polypeptide deformylase family. Fe(2+) serves as cofactor.

It catalyses the reaction N-terminal N-formyl-L-methionyl-[peptide] + H2O = N-terminal L-methionyl-[peptide] + formate. Removes the formyl group from the N-terminal Met of newly synthesized proteins. Requires at least a dipeptide for an efficient rate of reaction. N-terminal L-methionine is a prerequisite for activity but the enzyme has broad specificity at other positions. The polypeptide is Peptide deformylase 2 (Xanthomonas axonopodis pv. citri (strain 306)).